The chain runs to 1374 residues: Tripeptidyl-peptidase 2 (1374 aa).

Residues A62 to Y558 enclose the Peptidase S8 domain. Catalysis depends on charge relay system residues D93, H314, and S499.

This sequence belongs to the peptidase S8 family. As to expression, expressed in intestinal fat-storing cells and some head neurons.

The enzyme catalyses Release of an N-terminal tripeptide from a polypeptide.. Its function is as follows. Component of the proteolytic cascade acting downstream of the 26S proteasome in the ubiquitin-proteasome pathway. Has a role in regulation of fat storage. The polypeptide is Tripeptidyl-peptidase 2 (tpp-2) (Caenorhabditis elegans).